A 514-amino-acid chain; its full sequence is 3-octaprenyl-4-hydroxybenzoate carboxy-lyase (514 aa).

Asparagine 177 lines the Mn(2+) pocket. Residues 180–182 (IYR), 194–196 (RWL), and 199–200 (RG) each bind prenylated FMN. Glutamate 243 lines the Mn(2+) pocket. The active-site Proton donor is aspartate 314.

Belongs to the UbiD family. As to quaternary structure, homohexamer. Prenylated FMN serves as cofactor. Requires Mn(2+) as cofactor.

Its subcellular location is the cell membrane. It carries out the reaction a 4-hydroxy-3-(all-trans-polyprenyl)benzoate + H(+) = a 2-(all-trans-polyprenyl)phenol + CO2. It participates in cofactor biosynthesis; ubiquinone biosynthesis. In terms of biological role, catalyzes the decarboxylation of 3-octaprenyl-4-hydroxy benzoate to 2-octaprenylphenol, an intermediate step in ubiquinone biosynthesis. This is 3-octaprenyl-4-hydroxybenzoate carboxy-lyase from Bordetella bronchiseptica (strain ATCC BAA-588 / NCTC 13252 / RB50) (Alcaligenes bronchisepticus).